The chain runs to 105 residues: Cell division protein FtsB (105 aa).

The Cytoplasmic portion of the chain corresponds to 1 to 3 (MRL). The helical transmembrane segment at 4–21 (FTLILMVVLALVQRQLWF) threads the bilayer. The Periplasmic portion of the chain corresponds to 22–105 (GKNGLVEYRQ…NKQSSLPKSD (84 aa)). The stretch at 28–74 (EYRQVSENLLRRQADNQKLQERNMLLKEDIEDLKSGLEAIEELARND) forms a coiled coil.

Belongs to the FtsB family. As to quaternary structure, part of a complex composed of FtsB, FtsL and FtsQ.

The protein resides in the cell inner membrane. Its function is as follows. Essential cell division protein. May link together the upstream cell division proteins, which are predominantly cytoplasmic, with the downstream cell division proteins, which are predominantly periplasmic. This Tolumonas auensis (strain DSM 9187 / NBRC 110442 / TA 4) protein is Cell division protein FtsB.